The following is a 534-amino-acid chain: Serine/threonine-protein kinase ppk15 (534 aa).

Residues M1 to F40 form a disordered region. Phosphoserine is present on residues S33, S56, and S60. Positions F85–N104 are disordered. In terms of domain architecture, Protein kinase spans Y130–I458. Residues L136 to V144 and K159 each bind ATP. D257 acts as the Proton acceptor in catalysis. At Y291 the chain carries Phosphotyrosine.

It belongs to the protein kinase superfamily. Ser/Thr protein kinase family.

Its subcellular location is the cytoplasm. It localises to the cytoskeleton. It is found in the microtubule organizing center. The protein localises to the spindle pole body. It carries out the reaction L-seryl-[protein] + ATP = O-phospho-L-seryl-[protein] + ADP + H(+). The catalysed reaction is L-threonyl-[protein] + ATP = O-phospho-L-threonyl-[protein] + ADP + H(+). The protein is Serine/threonine-protein kinase ppk15 (ppk15) of Schizosaccharomyces pombe (strain 972 / ATCC 24843) (Fission yeast).